Here is a 409-residue protein sequence, read N- to C-terminus: Tyrosine--tRNA ligase (409 aa).

The 'HIGH' region motif lies at 54–63 (PTAPDIHLGH). Residues 238–242 (KMSKS) carry the 'KMSKS' region motif. K241 is a binding site for ATP. In terms of domain architecture, S4 RNA-binding spans 347-407 (QGILRILREA…GKRKFARVKL (61 aa)).

This sequence belongs to the class-I aminoacyl-tRNA synthetase family. TyrS type 2 subfamily. As to quaternary structure, homodimer.

The protein resides in the cytoplasm. The catalysed reaction is tRNA(Tyr) + L-tyrosine + ATP = L-tyrosyl-tRNA(Tyr) + AMP + diphosphate + H(+). Functionally, catalyzes the attachment of tyrosine to tRNA(Tyr) in a two-step reaction: tyrosine is first activated by ATP to form Tyr-AMP and then transferred to the acceptor end of tRNA(Tyr). In Bordetella parapertussis (strain 12822 / ATCC BAA-587 / NCTC 13253), this protein is Tyrosine--tRNA ligase.